Here is a 163-residue protein sequence, read N- to C-terminus: Nucleotide-binding protein CGSHiGG_08790 (163 aa).

It belongs to the YajQ family.

Its function is as follows. Nucleotide-binding protein. The polypeptide is Nucleotide-binding protein CGSHiGG_08790 (Haemophilus influenzae (strain PittGG)).